Here is a 328-residue protein sequence, read N- to C-terminus: L-lactate dehydrogenase (328 aa).

NAD(+) contacts are provided by residues V18, E39, K46, Y71, and 85–86; that span reads GA. Positions 88 and 94 each coordinate substrate. Residues S107, 124 to 126, and S149 contribute to the NAD(+) site; that span reads AAN. 126-129 contributes to the substrate binding site; that stretch reads NPVD. Substrate is bound at residue 154-157; it reads DSAR. Residues R159 and H174 each coordinate beta-D-fructose 1,6-bisphosphate. The Proton acceptor role is filled by H181. Y226 carries the phosphotyrosine modification. T235 is a substrate binding site.

It belongs to the LDH/MDH superfamily. LDH family. Homotetramer.

It is found in the cytoplasm. The catalysed reaction is (S)-lactate + NAD(+) = pyruvate + NADH + H(+). It functions in the pathway fermentation; pyruvate fermentation to lactate; (S)-lactate from pyruvate: step 1/1. With respect to regulation, allosterically activated by fructose 1,6-bisphosphate (FBP). Catalyzes the conversion of lactate to pyruvate. The sequence is that of L-lactate dehydrogenase from Streptococcus thermophilus (strain CNRZ 1066).